The primary structure comprises 511 residues: Putative thymidine phosphorylase (511 aa).

This sequence belongs to the thymidine/pyrimidine-nucleoside phosphorylase family. Type 2 subfamily.

The enzyme catalyses thymidine + phosphate = 2-deoxy-alpha-D-ribose 1-phosphate + thymine. The sequence is that of Putative thymidine phosphorylase from Polaromonas sp. (strain JS666 / ATCC BAA-500).